Consider the following 398-residue polypeptide: Dihydroorotase (398 aa).

2 residues coordinate Zn(2+): histidine 58 and histidine 60. Residues 60-62 and asparagine 92 each bind substrate; that span reads HFR. Zn(2+) is bound by residues aspartate 151, histidine 178, and histidine 215. Asparagine 256 lines the substrate pocket. Aspartate 283 provides a ligand contact to Zn(2+). Aspartate 283 is an active-site residue. Residues histidine 287 and 297–298 each bind substrate; that span reads PG.

This sequence belongs to the metallo-dependent hydrolases superfamily. DHOase family. Class I DHOase subfamily. Requires Zn(2+) as cofactor.

It catalyses the reaction (S)-dihydroorotate + H2O = N-carbamoyl-L-aspartate + H(+). Its pathway is pyrimidine metabolism; UMP biosynthesis via de novo pathway; (S)-dihydroorotate from bicarbonate: step 3/3. In terms of biological role, catalyzes the reversible cyclization of carbamoyl aspartate to dihydroorotate. This Clostridium botulinum (strain Eklund 17B / Type B) protein is Dihydroorotase.